The chain runs to 162 residues: Large ribosomal subunit protein uL10 (162 aa).

Belongs to the universal ribosomal protein uL10 family. In terms of assembly, part of the ribosomal stalk of the 50S ribosomal subunit. The N-terminus interacts with L11 and the large rRNA to form the base of the stalk. The C-terminus forms an elongated spine to which L12 dimers bind in a sequential fashion forming a multimeric L10(L12)X complex.

Functionally, forms part of the ribosomal stalk, playing a central role in the interaction of the ribosome with GTP-bound translation factors. The polypeptide is Large ribosomal subunit protein uL10 (Vibrio cholerae serotype O1 (strain ATCC 39541 / Classical Ogawa 395 / O395)).